A 559-amino-acid chain; its full sequence is MAFSLRENPRLLNCLDSDIPALSTCSNADAFCRMNTMLGNSLDLSGVCTTPTAKCKRDPFNDRPDSDLSAVRSRMLFPSGGQDSSRGLPDVNNWGLGLQSLSLSDWERPWSSHDTDPSVKTNTASLQGILGTPSQLTNKLSNYSDSSIGATDFLEKFPGMARLNSQSFLDSHSISPVDSETSGFSSGSDHLSDLLSSLRISPSVPFLMSSMQRDPLKLALDSRMDHSSSPLTPPPSASPSGSLSHRWPGASIWPSWDLMKTPESPFSIEREAWLHRQAASINEATFTWSGQLPPRHYQNPVYSCKVFLGGVPWDITEAGLINTFKCYGPLSVEWPGKDGKHPRCPPKGNMPKGYVYLVFESDKSVRALLQDCTEDLLHPEGYSEYYFKMSSRRMRCKDAQVIPWVISDSNYVSCPSQRLDPRNTVFVGALHGMLNAEALASIMNDLFGGVVYAGIDTDKHKYPIGSGRVTFNNQRSYLKAVSAAFVEIKTPKFTKKVQIDPYLEDAICQSCSREPGPFFCRDKTCFKYYCRSCWHRQHSMDILSNHRPLMRNQKKRDAN.

A disordered region spans residues 222–243; it reads SRMDHSSSPLTPPPSASPSGSL. RRM domains lie at 304 to 401 and 423 to 504; these read CKVF…DAQV and NTVF…PYLE. Zn(2+) contacts are provided by Cys-508, Cys-511, Cys-520, Cys-525, Cys-530, Cys-533, His-538, and His-546.

This sequence belongs to the RRM CPEB family. As to expression, expressed in oocytes (at protein level). During oocyte maturation becomes detectable at stage Ib, and remains ubiquitously distributed within the oocyte cytoplasm until stage II. It then follows a gradual accumulation to the future animal pole during stage III, and remains localized to this pole at stage IV (at protein level). Expressed in oocytes, blastomeres and pre-mid-blastula transition embryos. Its expression during oogenesis is ubiquitous at stages I and II, but gradually accumulated at the periphery of the oocyte in the presumptive animal pole during stage III. Expression was maintained in that region at stage IV, and then became delocalized at stage V to cover a much broader area presumably encompassing the future blastodisc.

The protein resides in the cytoplasm. Sequence-specific RNA-binding protein that regulates mRNA cytoplasmic polyadenylation and translation initiation during oocyte maturation and early development. Binds to the cytoplasmic polyadenylation element (CPE), an uridine-rich sequence element (consensus sequence 5'-UUUUUAU-3') within the mRNA 3'-UTR. This is Cytoplasmic polyadenylation element-binding protein 1 (cpeb1) from Danio rerio (Zebrafish).